We begin with the raw amino-acid sequence, 227 residues long: MAHATQVGLQDATSPIMEELISFHDHALMIIFLISFLVLYALFLTLTTKLTNTNITDAQEMETVWTILPAIILVLIALPSLRILYLTDEINDPSFTIKAIGHQWYWAYEYTDYGGLIFNSYMLPPLFLEPGDLRLLEVDNRVVLPIEAPVRMMITSQDVLHSWTVPSLGLKTDAIPGRLNQTTFTATRPGVYYGQCSEICGANHSFMPIVLELIPLKIFEMGPVFTL.

Residues 1-14 (MAHATQVGLQDATS) lie on the Mitochondrial intermembrane side of the membrane. The helical transmembrane segment at 15 to 45 (PIMEELISFHDHALMIIFLISFLVLYALFLT) threads the bilayer. Topologically, residues 46–59 (LTTKLTNTNITDAQ) are mitochondrial matrix. A helical transmembrane segment spans residues 60–87 (EMETVWTILPAIILVLIALPSLRILYLT). The Mitochondrial intermembrane portion of the chain corresponds to 88–227 (DEINDPSFTI…IFEMGPVFTL (140 aa)). Residues His161, Cys196, Glu198, Cys200, His204, and Met207 each contribute to the Cu cation site. Residue Glu198 coordinates Mg(2+).

Belongs to the cytochrome c oxidase subunit 2 family. Component of the cytochrome c oxidase (complex IV, CIV), a multisubunit enzyme composed of 14 subunits. The complex is composed of a catalytic core of 3 subunits MT-CO1, MT-CO2 and MT-CO3, encoded in the mitochondrial DNA, and 11 supernumerary subunits COX4I, COX5A, COX5B, COX6A, COX6B, COX6C, COX7A, COX7B, COX7C, COX8 and NDUFA4, which are encoded in the nuclear genome. The complex exists as a monomer or a dimer and forms supercomplexes (SCs) in the inner mitochondrial membrane with NADH-ubiquinone oxidoreductase (complex I, CI) and ubiquinol-cytochrome c oxidoreductase (cytochrome b-c1 complex, complex III, CIII), resulting in different assemblies (supercomplex SCI(1)III(2)IV(1) and megacomplex MCI(2)III(2)IV(2)). Found in a complex with TMEM177, COA6, COX18, COX20, SCO1 and SCO2. Interacts with TMEM177 in a COX20-dependent manner. Interacts with COX20. Interacts with COX16. Requires Cu cation as cofactor.

The protein resides in the mitochondrion inner membrane. It catalyses the reaction 4 Fe(II)-[cytochrome c] + O2 + 8 H(+)(in) = 4 Fe(III)-[cytochrome c] + 2 H2O + 4 H(+)(out). In terms of biological role, component of the cytochrome c oxidase, the last enzyme in the mitochondrial electron transport chain which drives oxidative phosphorylation. The respiratory chain contains 3 multisubunit complexes succinate dehydrogenase (complex II, CII), ubiquinol-cytochrome c oxidoreductase (cytochrome b-c1 complex, complex III, CIII) and cytochrome c oxidase (complex IV, CIV), that cooperate to transfer electrons derived from NADH and succinate to molecular oxygen, creating an electrochemical gradient over the inner membrane that drives transmembrane transport and the ATP synthase. Cytochrome c oxidase is the component of the respiratory chain that catalyzes the reduction of oxygen to water. Electrons originating from reduced cytochrome c in the intermembrane space (IMS) are transferred via the dinuclear copper A center (CU(A)) of subunit 2 and heme A of subunit 1 to the active site in subunit 1, a binuclear center (BNC) formed by heme A3 and copper B (CU(B)). The BNC reduces molecular oxygen to 2 water molecules using 4 electrons from cytochrome c in the IMS and 4 protons from the mitochondrial matrix. In Hylobates lar (Lar gibbon), this protein is Cytochrome c oxidase subunit 2 (MT-CO2).